The chain runs to 616 residues: Dihydroxy-acid dehydratase (616 aa).

Asp-81 serves as a coordination point for Mg(2+). Cys-122 contributes to the [2Fe-2S] cluster binding site. Residues Asp-123 and Lys-124 each coordinate Mg(2+). Residue Lys-124 is modified to N6-carboxylysine. Cys-197 is a [2Fe-2S] cluster binding site. Glu-493 provides a ligand contact to Mg(2+). Ser-519 serves as the catalytic Proton acceptor.

It belongs to the IlvD/Edd family. Homodimer. It depends on [2Fe-2S] cluster as a cofactor. Mg(2+) is required as a cofactor.

It carries out the reaction (2R)-2,3-dihydroxy-3-methylbutanoate = 3-methyl-2-oxobutanoate + H2O. It catalyses the reaction (2R,3R)-2,3-dihydroxy-3-methylpentanoate = (S)-3-methyl-2-oxopentanoate + H2O. The protein operates within amino-acid biosynthesis; L-isoleucine biosynthesis; L-isoleucine from 2-oxobutanoate: step 3/4. It participates in amino-acid biosynthesis; L-valine biosynthesis; L-valine from pyruvate: step 3/4. Functionally, functions in the biosynthesis of branched-chain amino acids. Catalyzes the dehydration of (2R,3R)-2,3-dihydroxy-3-methylpentanoate (2,3-dihydroxy-3-methylvalerate) into 2-oxo-3-methylpentanoate (2-oxo-3-methylvalerate) and of (2R)-2,3-dihydroxy-3-methylbutanoate (2,3-dihydroxyisovalerate) into 2-oxo-3-methylbutanoate (2-oxoisovalerate), the penultimate precursor to L-isoleucine and L-valine, respectively. This Corynebacterium kroppenstedtii (strain DSM 44385 / JCM 11950 / CIP 105744 / CCUG 35717) protein is Dihydroxy-acid dehydratase.